The following is a 106-amino-acid chain: Replication restart protein PriB (106 aa).

Residues 4-103 (VNRLVLSGTV…LHAEQIELID (100 aa)) form the SSB domain.

The protein belongs to the PriB family. As to quaternary structure, homodimer. Interacts with PriA and DnaT. Component of the replication restart primosome. Primosome assembly occurs via a 'hand-off' mechanism. PriA binds to replication forks, subsequently PriB then DnaT bind; DnaT then displaces ssDNA to generate the helicase loading substrate.

Involved in the restart of stalled replication forks, which reloads the replicative helicase on sites other than the origin of replication; the PriA-PriB pathway is the major replication restart pathway. During primosome assembly it facilitates complex formation between PriA and DnaT on DNA; stabilizes PriA on DNA. Stimulates the DNA unwinding activity of PriA helicase. This is Replication restart protein PriB from Pectobacterium carotovorum subsp. carotovorum (strain PC1).